Here is an 801-residue protein sequence, read N- to C-terminus: Glycerol-3-phosphate acyltransferase 2, mitochondrial (801 aa).

The disordered stretch occupies residues 1–24 (METMLKSNPQMQQRNNHSGQETSL). Residues 1–305 (METMLKSNPQ…PGPRLSALGQ (305 aa)) are Cytoplasmic-facing. Positions 180–290 (QLHKGQMKMV…SGQPLLIFLE (111 aa)) are acyltransferase. An HXXXXD motif motif is present at residues 205 to 210 (HKSLLD). A helical transmembrane segment spans residues 306–332 (AWLGLVVQAVQAGIVPDATLVPVATAY). Topologically, residues 333–449 (DLVPDAPCNM…QLLVRRLSRH (117 aa)) are mitochondrial intermembrane. Residues 450-472 (VLSASVASSAVMSTAIMATLLLL) form a helical membrane-spanning segment. Over 473–795 (KHQKGVVLSQ…DNQDKLEQFI (323 aa)) the chain is Cytoplasmic.

This sequence belongs to the GPAT/DAPAT family. Interacts with PIWIL2. Expressed in spermatocytes and spermatides.

The protein resides in the mitochondrion outer membrane. It catalyses the reaction sn-glycerol 3-phosphate + an acyl-CoA = a 1-acyl-sn-glycero-3-phosphate + CoA. The catalysed reaction is a 1-acyl-sn-glycero-3-phosphate + an acyl-CoA = a 1,2-diacyl-sn-glycero-3-phosphate + CoA. The enzyme catalyses 1-(9Z-octadecenoyl)-sn-glycero-3-phosphate + (9Z)-octadecenoyl-CoA = 1,2-di-(9Z-octadecenoyl)-sn-glycero-3-phosphate + CoA. It carries out the reaction 1-(9Z-octadecenoyl)-sn-glycero-3-phosphate + (5Z,8Z,11Z,14Z)-eicosatetraenoyl-CoA = 1-(9Z)-octadecenoyl-2-(5Z,8Z,11Z,14Z)-eicosatetraenoyl-sn-glycero-3-phosphate + CoA. It catalyses the reaction (5Z,8Z,11Z,14Z)-eicosatetraenoyl-CoA + sn-glycerol 3-phosphate = 1-(5Z,8Z,11Z,14Z-eicosatetraenoyl)-sn-glycero-3-phosphate + CoA. It functions in the pathway phospholipid metabolism; CDP-diacylglycerol biosynthesis; CDP-diacylglycerol from sn-glycerol 3-phosphate: step 1/3. Its activity is regulated as follows. Inhibited by N-ethylmaleimide (NEM). In terms of biological role, transfers an acyl-group from acyl-ACP to the sn-1 position of glycerol-3-phosphate producing a lysophosphatidic acid (LPA), an essential step for the triacylglycerol (TAG) and glycerophospholipids. In vitro also transfers an acyl-group from acyl-ACP to the LPA producing a phosphatidic acid (PA). Prefers arachidonoyl-CoA as the acyl donor. Required for primary processing step during piRNA biosynthesis. Molecular mechanisms by which it promotes piRNA biosynthesis are unclear and do not involve its acyltransferase activity. The chain is Glycerol-3-phosphate acyltransferase 2, mitochondrial from Rattus norvegicus (Rat).